Reading from the N-terminus, the 461-residue chain is Pyruvate kinase (461 aa).

Arg-46 contacts substrate. Residues Asn-48 and Asp-80 each coordinate K(+). Residue 48–51 (NLAH) coordinates ATP. Positions 87 and 165 each coordinate ATP. A Mg(2+)-binding site is contributed by Glu-232. 3 residues coordinate substrate: Gly-255, Asp-256, and Thr-288. Asp-256 lines the Mg(2+) pocket.

The protein belongs to the pyruvate kinase family. In terms of assembly, homotetramer. The cofactor is a divalent metal cation.

The catalysed reaction is pyruvate + ATP = phosphoenolpyruvate + ADP + H(+). Its pathway is carbohydrate degradation; glycolysis; pyruvate from D-glyceraldehyde 3-phosphate: step 5/5. Not activated by classical allosteric effectors. The chain is Pyruvate kinase (pyk) from Pyrobaculum aerophilum (strain ATCC 51768 / DSM 7523 / JCM 9630 / CIP 104966 / NBRC 100827 / IM2).